The sequence spans 335 residues: Ferrochelatase (335 aa).

Residues histidine 207 and glutamate 288 each coordinate Fe cation.

It belongs to the ferrochelatase family.

It is found in the cytoplasm. It catalyses the reaction heme b + 2 H(+) = protoporphyrin IX + Fe(2+). It functions in the pathway porphyrin-containing compound metabolism; protoheme biosynthesis; protoheme from protoporphyrin-IX: step 1/1. Its function is as follows. Catalyzes the ferrous insertion into protoporphyrin IX. This Helicobacter pylori (strain J99 / ATCC 700824) (Campylobacter pylori J99) protein is Ferrochelatase.